Consider the following 492-residue polypeptide: Probable cytochrome P450 313a1 (492 aa).

Cys438 contributes to the heme binding site.

The protein belongs to the cytochrome P450 family. The cofactor is heme.

Its subcellular location is the endoplasmic reticulum membrane. The protein localises to the microsome membrane. In terms of biological role, may be involved in the metabolism of insect hormones and in the breakdown of synthetic insecticides. The protein is Probable cytochrome P450 313a1 (Cyp313a1) of Drosophila melanogaster (Fruit fly).